The following is a 319-amino-acid chain: NADH-quinone oxidoreductase subunit H 1 (319 aa).

Helical transmembrane passes span 5 to 25 (ILTA…AGVF), 78 to 98 (LAPA…AFGE), 109 to 129 (VMFL…GALA), 147 to 167 (LAYE…AGSL), 179 to 199 (VWFI…GIAA), 214 to 234 (LVGG…FLGE), 238 to 258 (ILLV…GPWL), 262 to 282 (IWFG…RAAL), and 294 to 314 (AWKV…FIVV).

The protein belongs to the complex I subunit 1 family. As to quaternary structure, NDH-1 is composed of 14 different subunits. Subunits NuoA, H, J, K, L, M, N constitute the membrane sector of the complex.

It localises to the cell inner membrane. The catalysed reaction is a quinone + NADH + 5 H(+)(in) = a quinol + NAD(+) + 4 H(+)(out). In terms of biological role, NDH-1 shuttles electrons from NADH, via FMN and iron-sulfur (Fe-S) centers, to quinones in the respiratory chain. The immediate electron acceptor for the enzyme in this species is believed to be ubiquinone. Couples the redox reaction to proton translocation (for every two electrons transferred, four hydrogen ions are translocated across the cytoplasmic membrane), and thus conserves the redox energy in a proton gradient. This subunit may bind ubiquinone. The sequence is that of NADH-quinone oxidoreductase subunit H 1 from Rhodopseudomonas palustris (strain BisA53).